Here is a 286-residue protein sequence, read N- to C-terminus: 4-diphosphocytidyl-2-C-methyl-D-erythritol kinase (286 aa).

Lys11 is a catalytic residue. Residue 94–104 (PMGGGIGGGSS) participates in ATP binding. Asp136 is a catalytic residue.

This sequence belongs to the GHMP kinase family. IspE subfamily.

It carries out the reaction 4-CDP-2-C-methyl-D-erythritol + ATP = 4-CDP-2-C-methyl-D-erythritol 2-phosphate + ADP + H(+). The protein operates within isoprenoid biosynthesis; isopentenyl diphosphate biosynthesis via DXP pathway; isopentenyl diphosphate from 1-deoxy-D-xylulose 5-phosphate: step 3/6. Catalyzes the phosphorylation of the position 2 hydroxy group of 4-diphosphocytidyl-2C-methyl-D-erythritol. In Pseudomonas putida (strain ATCC 700007 / DSM 6899 / JCM 31910 / BCRC 17059 / LMG 24140 / F1), this protein is 4-diphosphocytidyl-2-C-methyl-D-erythritol kinase.